A 324-amino-acid chain; its full sequence is Ferrochelatase (324 aa).

Histidine 197 and glutamate 278 together coordinate Fe cation.

This sequence belongs to the ferrochelatase family.

It localises to the cytoplasm. It carries out the reaction heme b + 2 H(+) = protoporphyrin IX + Fe(2+). It functions in the pathway porphyrin-containing compound metabolism; protoheme biosynthesis; protoheme from protoporphyrin-IX: step 1/1. Functionally, catalyzes the ferrous insertion into protoporphyrin IX. The sequence is that of Ferrochelatase from Aeromonas hydrophila subsp. hydrophila (strain ATCC 7966 / DSM 30187 / BCRC 13018 / CCUG 14551 / JCM 1027 / KCTC 2358 / NCIMB 9240 / NCTC 8049).